The following is a 981-amino-acid chain: DNA ligase 4 (981 aa).

9 residues coordinate ATP: E320, K322, R327, E380, F424, E484, K489, K506, and K508. K322 functions as the N6-AMP-lysine intermediate in the catalytic mechanism. E380 is a Mg(2+) binding site. Residue E484 coordinates Mg(2+). The segment at 544–563 (SEKNNPSSYESGSDSDSDSE) is disordered. 2 consecutive BRCT domains span residues 721–819 (SKAD…PKYV) and 875–980 (ERLL…EYAA).

It belongs to the ATP-dependent DNA ligase family. Requires Mg(2+) as cofactor.

The protein localises to the nucleus. It catalyses the reaction ATP + (deoxyribonucleotide)n-3'-hydroxyl + 5'-phospho-(deoxyribonucleotide)m = (deoxyribonucleotide)n+m + AMP + diphosphate.. Functionally, DNA ligase involved in DNA non-homologous end joining (NHEJ); required for double-strand break (DSB) repair. This Eremothecium gossypii (strain ATCC 10895 / CBS 109.51 / FGSC 9923 / NRRL Y-1056) (Yeast) protein is DNA ligase 4 (LIG4).